Consider the following 306-residue polypeptide: Pyridoxal 5'-phosphate synthase subunit SNZERR (306 aa).

A D-ribose 5-phosphate-binding site is contributed by D34. Catalysis depends on K91, which acts as the Schiff-base intermediate with D-ribose 5-phosphate. G163 is a D-ribose 5-phosphate binding site. R175 lines the D-glyceraldehyde 3-phosphate pocket. D-ribose 5-phosphate-binding positions include G224 and 245 to 246 (GS).

Belongs to the PdxS/SNZ family.

The enzyme catalyses aldehydo-D-ribose 5-phosphate + D-glyceraldehyde 3-phosphate + L-glutamine = pyridoxal 5'-phosphate + L-glutamate + phosphate + 3 H2O + H(+). The protein operates within cofactor biosynthesis; pyridoxal 5'-phosphate biosynthesis. Its function is as follows. Catalyzes the formation of pyridoxal 5'-phosphate from ribose 5-phosphate (RBP), glyceraldehyde 3-phosphate (G3P) and ammonia. The ammonia is provided by PDX2. Can also use ribulose 5-phosphate and dihydroxyacetone phosphate as substrates, resulting from enzyme-catalyzed isomerization of RBP and G3P, respectively. Also plays an indirect role in resistance to singlet oxygen-generating photosensitizers. The chain is Pyridoxal 5'-phosphate synthase subunit SNZERR (SNZERR) from Suberites domuncula (Sponge).